Reading from the N-terminus, the 340-residue chain is Serine/threonine-protein kinase PDIK1L (340 aa).

The 326-residue stretch at 8–333 (YDLIREVGRG…LELRLVQIAF (326 aa)) folds into the Protein kinase domain. Residues 14 to 22 (VGRGSYGVV) and K37 each bind ATP. The active-site Proton acceptor is the D164.

This sequence belongs to the protein kinase superfamily. Ser/Thr protein kinase family.

Its subcellular location is the nucleus. The enzyme catalyses L-seryl-[protein] + ATP = O-phospho-L-seryl-[protein] + ADP + H(+). The catalysed reaction is L-threonyl-[protein] + ATP = O-phospho-L-threonyl-[protein] + ADP + H(+). The polypeptide is Serine/threonine-protein kinase PDIK1L (PDIK1L) (Pongo abelii (Sumatran orangutan)).